We begin with the raw amino-acid sequence, 100 residues long: Large ribosomal subunit protein uL23 (100 aa).

The protein belongs to the universal ribosomal protein uL23 family. Part of the 50S ribosomal subunit. Contacts protein L29, and trigger factor when it is bound to the ribosome.

Its function is as follows. One of the early assembly proteins it binds 23S rRNA. One of the proteins that surrounds the polypeptide exit tunnel on the outside of the ribosome. Forms the main docking site for trigger factor binding to the ribosome. The chain is Large ribosomal subunit protein uL23 from Prochlorococcus marinus (strain MIT 9515).